The chain runs to 484 residues: MAELRPSVAPGPAAPPASGPSAPPAFASLFPPGLHAIYGECRRLYPDQPNPLQVTAIVKYWLGGPDPLDYVSMYRNMGSPSANIPEHWHYISFGLSDLYGDNRVHEFTGTDGPSGFGFELTFRLKRETGESAPPTWPAELMQGLARYVFQSENTFCSGDHVSWHSPLDNSESRIQHMLLTEDPQMQPVRTPFGVVTFLQIVGVCTEELHSAQQWNGQGILELLRTVPIAGGPWLITDMRRGETIFEIDPHLQERVDKGIETDGSNLSGVSAKCAWDDLSRPPEDEEDSRSICLGTQPRRLSGKDTEQIRETLRRGLEINSKPVLPPINSQRQNGLTHDRAPSRKDSLGSDSSTAIIPHELIRTRQLESVHLKFNQESGALIPLCLRGRLLHGRHFTYKSITGDMAITFVSTGVEGAFATEEHPYAAHGPWLQILLTEEFVEKMLEDLEDLTSPEEFKLPKEYSWPEKKLKVSILPDVVFDSPLH.

Positions 1–21 (MAELRPSVAPGPAAPPASGPS) are disordered. Over residues 12 to 21 (PAAPPASGPS) the composition is skewed to pro residues. A Glycyl lysine isopeptide (Lys-Gly) (interchain with G-Cter in ubiquitin) cross-link involves residue Lys257. The disordered stretch occupies residues 279 to 360 (SRPPEDEEDS…SSTAIIPHEL (82 aa)). Residue Ser301 is modified to Phosphoserine. Lys303 carries the post-translational modification N6-acetyllysine. Lys321 participates in a covalent cross-link: Glycyl lysine isopeptide (Lys-Gly) (interchain with G-Cter in SUMO2). Positions 336 to 347 (THDRAPSRKDSL) are enriched in basic and acidic residues. Phosphoserine occurs at positions 342, 346, and 352. At Thr353 the chain carries Phosphothreonine. Ser481 carries the phosphoserine modification.

It belongs to the SUFU family. May form homodimers. Interacts with ULK3; inactivating the protein kinase activity of ULK3. Interacts with RAB23. Part of a DNA-bound corepressor complex containing SAP18, GLI1 and SIN3. Part of a complex containing CTNNB1. Binds BTRC, GLI2, GLI3, SAP18 and STK36. Binds both free and DNA-bound GLI1. Interacts with KIF7. Interacts with GLI3FL and this interaction regulates the formation of either repressor or activator forms of GLI3. Its association with GLI3FL is regulated by Hh signaling and dissociation of the SUFU-GLI3 interaction requires the presence of the ciliary motor KIF3A. Post-translationally, polyubiquitinated at Lys-257 by the SCF(FBXL17) complex, leading to its subsequent degradation and allowing the release of GLI1 for proper hedgehog/smoothened signal transduction. Ubiquitination is impaired by phosphorylation at Ser-342, Ser-346, Ser-352 and Thr-353. Phosphorylation at Ser-342, Ser-346, Ser-352 and Thr-353 prevents ubiquitination by the SCF(FBXL17) complex. Widely expressed in adult and fetal tissues.

The protein resides in the cytoplasm. The protein localises to the nucleus. Functionally, negative regulator in the hedgehog/smoothened signaling pathway. Down-regulates GLI1-mediated transactivation of target genes. Part of a corepressor complex that acts on DNA-bound GLI1. May also act by linking GLI1 to BTRC and thereby targeting GLI1 to degradation by the proteasome. Sequesters GLI1, GLI2 and GLI3 in the cytoplasm, this effect is overcome by binding of STK36 to both SUFU and a GLI protein. Negative regulator of beta-catenin signaling. Regulates the formation of either the repressor form (GLI3R) or the activator form (GLI3A) of the full-length form of GLI3 (GLI3FL). GLI3FL is complexed with SUFU in the cytoplasm and is maintained in a neutral state. Without the Hh signal, the SUFU-GLI3 complex is recruited to cilia, leading to the efficient processing of GLI3FL into GLI3R. When Hh signaling is initiated, SUFU dissociates from GLI3FL and the latter translocates to the nucleus, where it is phosphorylated, destabilized, and converted to a transcriptional activator (GLI3A). Required for normal embryonic development. Required for the proper formation of hair follicles and the control of epidermal differentiation. In Mus musculus (Mouse), this protein is Suppressor of fused homolog.